A 487-amino-acid chain; its full sequence is Phosphoglucosamine mutase (487 aa).

S134 functions as the Phosphoserine intermediate in the catalytic mechanism. Mg(2+) is bound by residues S134, D277, D279, and D281. S134 bears the Phosphoserine mark.

It belongs to the phosphohexose mutase family. Mg(2+) is required as a cofactor. Activated by phosphorylation.

The catalysed reaction is alpha-D-glucosamine 1-phosphate = D-glucosamine 6-phosphate. In terms of biological role, catalyzes the conversion of glucosamine-6-phosphate to glucosamine-1-phosphate. In Gloeothece citriformis (strain PCC 7424) (Cyanothece sp. (strain PCC 7424)), this protein is Phosphoglucosamine mutase.